A 570-amino-acid chain; its full sequence is FERM domain-containing protein 5 (570 aa).

The FERM domain maps to 17–298; that stretch reads YSCTVRLLDD…ENQAFYKLEK (282 aa). The interaction with ROCK1 stretch occupies residues 308–353; that stretch reads SNLFFKGSRFRYSGRVAKEVMESSAKIKREPPEIHRAGMVPSRSCP. The disordered stretch occupies residues 344–367; the sequence is AGMVPSRSCPSITHGPRLSSVPRT. Position 375 is a phosphoserine (serine 375). Residues 385 to 407 are disordered; it reads DSAHSTPVRSTSHGDTFLPHVRS. The span at 388-398 shows a compositional bias: polar residues; the sequence is HSTPVRSTSHG. Residues 504–524 traverse the membrane as a helical segment; sequence LLLVTMGLLFVLLLLLIILTE.

Interacts with CTNND1. Interacts with ITGB5 (via cytoplasmic domain) and ROCK1.

Its subcellular location is the membrane. It localises to the cell junction. It is found in the adherens junction. Functionally, may be involved in regulation of cell migration. May regulate cell-matrix interactions via its interaction with ITGB5 and modifying ITGB5 cytoplasmic tail interactions such as with FERMT2 and TLN1. May regulate ROCK1 kinase activity possibly involved in regulation of actin stress fiber formation. The polypeptide is FERM domain-containing protein 5 (FRMD5) (Homo sapiens (Human)).